Consider the following 715-residue polypeptide: Protein DOA1 (715 aa).

7 WD repeats span residues Gly11–Ser40, Gly53–Pro82, Gly97–Lys125, Ala135–Gln166, Ile177–Asp206, Gly218–Ser247, and Leu259–Ser288. Ser332 bears the Phosphoserine mark. In terms of domain architecture, PFU spans Ala352 to Asp449. Positions Phe434–Asn440 are interaction with HSE1. The PUL domain maps to Lys465 to Ser715. 6 ARM repeats span residues Tyr478 to Ile512, Asp513 to Ile543, Val544 to Asn582, Glu583 to Lys635, Gly636 to Val680, and Glu681 to Ser715.

Belongs to the WD repeat PLAP family. Forms a complex composed of CDC48, NPL4, UFD1, DOA1, SHP1 and deubiquitinase OTU1; within the complex interacts with CDC48. Interacts (via PUL domain) with CDC48 (via C-terminus); the interaction is direct. Forms a complex composed of CDC48, DOA1, deubiquitinase UBP3 and probably BRE5; within the complex interacts with CDC48 and UBP3. May form a complex composed of VPS27, HSE1 and DOA1. Interacts with HSE1 (via SH3 domain). Interacts (via WD repeats and PFU domain) with ubiquitin; the interaction is direct. Interacts with ubiquitinated FZO1 but not unmodified FZO1; the interaction recruits FZO1 to CDC48 and promotes FZO1 proteasomal degradation.

The protein localises to the nucleus. Its subcellular location is the cytoplasm. The protein resides in the mitochondrion outer membrane. It is found in the endosome membrane. Ubiquitin-binding protein involved in protein ubiquitination, sorting and degradation. Acts as a ubiquitinated substrate-recruiting adapter for chaperone ATPase CDC48 by binding mono- or polyubiquitin chains. Depending on the context, promotes or prevents proteasomal degradation of ubiquitinated proteins. Involved in the ubiquitin fusion degradation (UFD) pathway by promoting the degradation of ubiquitinated proteins. Involved in the mitochondria-associated degradation pathway (MAD) by promoting the degradation of several ubiquitinated membrane proteins. By competing with UFD2 to bind CDC48, prevents the multi-ubiquitination and subsequent degradation of UFD2-dependent substrates. Required for ribophagy, a process which relocalizes ribosomal particles into the vacuole for degradation in response to starvation. Involved in the ubiquitin-mediated sorting of membrane proteins into multivesicular bodies (MVBs). In addition, plays an essential role in maintaining cellular ubiquitin levels. May affect indirectly the degradation of ubiquitinylated proteins by regulating cellular ubiquitin levels. The sequence is that of Protein DOA1 from Saccharomyces cerevisiae (strain ATCC 204508 / S288c) (Baker's yeast).